The primary structure comprises 140 residues: MLRDRNRSGVRGGAEGPSQRQRRVAEDLRHRLAELFARTEFRDPELAGVHITVAEVRMSPDLKHATVFVSRLGATDIDRYLPALKRIAPFLRGEIGHGLRMKFVPDLHFQPDHALDEATRINELLHRPEVMRDLLKPDEE.

Residues M1–R23 are disordered.

Belongs to the RbfA family. As to quaternary structure, monomer. Binds 30S ribosomal subunits, but not 50S ribosomal subunits or 70S ribosomes.

It is found in the cytoplasm. One of several proteins that assist in the late maturation steps of the functional core of the 30S ribosomal subunit. Associates with free 30S ribosomal subunits (but not with 30S subunits that are part of 70S ribosomes or polysomes). Required for efficient processing of 16S rRNA. May interact with the 5'-terminal helix region of 16S rRNA. The polypeptide is Ribosome-binding factor A (Acidiphilium cryptum (strain JF-5)).